The sequence spans 624 residues: NADPH-dependent diflavin oxidoreductase 1 (624 aa).

Positions 6–168 (IVILYGSETG…VYYEFEKRII (163 aa)) constitute a Flavodoxin-like domain. FMN-binding positions include 12–17 (SETGNA), 59–62 (STTG), 106–115 (LGDSSYPRFN), and Glu142. The 249-residue stretch at 226–474 (ETIRHGTVKK…LQNNHLLHED (249 aa)) folds into the FAD-binding FR-type domain. FAD is bound by residues Arg384, 414-417 (RFYS), and 446-449 (GLCT). Residues 539-540 (SR) and 548-552 (AKYVQ) contribute to the NADP(+) site. Trp624 lines the FAD pocket.

Belongs to the NADPH-dependent diflavin oxidoreductase NDOR1 family. The protein in the N-terminal section; belongs to the flavodoxin family. It in the C-terminal section; belongs to the flavoprotein pyridine nucleotide cytochrome reductase family. As to quaternary structure, interacts with DRE2; as part of the cytosolic iron-sulfur (Fe-S) protein assembly (CIA) machinery. FAD serves as cofactor. The cofactor is FMN.

Its subcellular location is the cytoplasm. It is found in the mitochondrion. The enzyme catalyses 2 oxidized [2Fe-2S]-[protein] + NADPH = 2 reduced [2Fe-2S]-[protein] + NADP(+) + H(+). Its function is as follows. NADPH-dependent reductase which is a central component of the cytosolic iron-sulfur (Fe-S) protein assembly (CIA) machinery. Transfers electrons from NADPH via its FAD and FMN prosthetic groups to the [2Fe-2S] cluster of DRE2, another key component of the CIA machinery. In turn, this reduced cluster provides electrons for assembly of cytosolic iron-sulfur cluster proteins. Positively controls H(2)O(2)-induced cell death. The polypeptide is NADPH-dependent diflavin oxidoreductase 1 (Kluyveromyces lactis (strain ATCC 8585 / CBS 2359 / DSM 70799 / NBRC 1267 / NRRL Y-1140 / WM37) (Yeast)).